The chain runs to 512 residues: uncharacterized protein (512 aa).

The next 12 helical transmembrane spans lie at 25–45 (GFYT…VICA), 55–75 (LLYP…PLIL), 96–116 (LVVC…VFLA), 123–143 (VVTG…LPAV), 148–168 (LLLT…LVIV), 183–203 (LLWL…FVGP), 238–258 (MTTY…SLRA), 263–283 (GSLH…SMLW), 294–314 (GLLL…MVAE), 329–349 (FLLA…WISV), 359–379 (LICV…VALG), and 386–406 (ATIW…VASL). The segment at 428–512 (YRPATPNPIH…APLDAGQRIA (85 aa)) is disordered.

Its subcellular location is the cell membrane. This is an uncharacterized protein from Mycobacterium tuberculosis (strain CDC 1551 / Oshkosh).